Here is an 889-residue protein sequence, read N- to C-terminus: Cytoplasmic aconitate hydratase (889 aa).

Substrate-binding positions include glutamine 86 and 205–207 (DSH). Cysteine 437, cysteine 503, and cysteine 506 together coordinate [4Fe-4S] cluster. Residues arginine 536, arginine 541, arginine 699, and 779–780 (SR) each bind substrate.

This sequence belongs to the aconitase/IPM isomerase family. As to quaternary structure, interacts (when associated with the 4Fe-4S) with FBXL5. Interacts with frataxin(81-210). Requires [4Fe-4S] cluster as cofactor.

It is found in the cytoplasm. Its subcellular location is the cytosol. The catalysed reaction is citrate = D-threo-isocitrate. Bifunctional iron sensor that switches between 2 activities depending on iron availability. Iron deprivation, promotes its mRNA binding activity through which it regulates the expression of genes involved in iron uptake, sequestration and utilization. Binds to iron-responsive elements (IRES) in the untranslated region of target mRNAs preventing for instance the translation of ferritin and aminolevulinic acid synthase and stabilizing the transferrin receptor mRNA. In terms of biological role, conversely, when cellular iron levels are high, binds a 4Fe-4S cluster which precludes RNA binding activity and promotes the aconitase activity, the isomerization of citrate to isocitrate via cis-aconitate. The polypeptide is Cytoplasmic aconitate hydratase (ACO1) (Bos taurus (Bovine)).